A 375-amino-acid polypeptide reads, in one-letter code: Heat-inducible transcription repressor HrcA (375 aa).

The segment covering 307–318 has biased composition (low complexity); it reads ATDGATHAAASS. The segment at 307–331 is disordered; sequence ATDGATHAAASSQTENQSGDDTRQA.

This sequence belongs to the HrcA family.

Negative regulator of class I heat shock genes (grpE-dnaK-dnaJ and groELS operons). Prevents heat-shock induction of these operons. This chain is Heat-inducible transcription repressor HrcA, found in Bifidobacterium adolescentis (strain ATCC 15703 / DSM 20083 / NCTC 11814 / E194a).